We begin with the raw amino-acid sequence, 194 residues long: ATP-dependent Clp protease proteolytic subunit (194 aa).

Catalysis depends on S97, which acts as the Nucleophile. H122 is a catalytic residue.

This sequence belongs to the peptidase S14 family. Fourteen ClpP subunits assemble into 2 heptameric rings which stack back to back to give a disk-like structure with a central cavity, resembling the structure of eukaryotic proteasomes.

It localises to the cytoplasm. It carries out the reaction Hydrolysis of proteins to small peptides in the presence of ATP and magnesium. alpha-casein is the usual test substrate. In the absence of ATP, only oligopeptides shorter than five residues are hydrolyzed (such as succinyl-Leu-Tyr-|-NHMec, and Leu-Tyr-Leu-|-Tyr-Trp, in which cleavage of the -Tyr-|-Leu- and -Tyr-|-Trp bonds also occurs).. Functionally, cleaves peptides in various proteins in a process that requires ATP hydrolysis. Has a chymotrypsin-like activity. Plays a major role in the degradation of misfolded proteins. The protein is ATP-dependent Clp protease proteolytic subunit of Lactobacillus helveticus (strain DPC 4571).